We begin with the raw amino-acid sequence, 185 residues long: MVQQIINTAKEKMDKAVQAFTRELATIRAGRANPSLLEKVTVDYYGMPTPIIQLASISVPEARLLVIQPYDKSVIKDIEKAILSSDLGLTPSNDGSVIRITIPPLTEERRRELVKLVKKYSEDAKVAVRNIRRDANDELKKLEKNGEITEDELRGYTDDVQKLTDDHIAKIDAITKEKEKEVMEV.

It belongs to the RRF family.

It is found in the cytoplasm. In terms of biological role, responsible for the release of ribosomes from messenger RNA at the termination of protein biosynthesis. May increase the efficiency of translation by recycling ribosomes from one round of translation to another. This is Ribosome-recycling factor from Geobacillus sp. (strain WCH70).